A 224-amino-acid polypeptide reads, in one-letter code: LexA repressor (224 aa).

Positions 31 to 51 (RAEIATELGFRSANAAEEHLQ) form a DNA-binding region, H-T-H motif. Active-site for autocatalytic cleavage activity residues include Ser-142 and Lys-179.

The protein belongs to the peptidase S24 family. Homodimer.

The catalysed reaction is Hydrolysis of Ala-|-Gly bond in repressor LexA.. Functionally, represses a number of genes involved in the response to DNA damage (SOS response), including recA and lexA. In the presence of single-stranded DNA, RecA interacts with LexA causing an autocatalytic cleavage which disrupts the DNA-binding part of LexA, leading to derepression of the SOS regulon and eventually DNA repair. The protein is LexA repressor of Albidiferax ferrireducens (strain ATCC BAA-621 / DSM 15236 / T118) (Rhodoferax ferrireducens).